Reading from the N-terminus, the 538-residue chain is Eukaryotic translation initiation factor 3 subunit L (538 aa).

Residues Thr305–His513 enclose the PCI domain.

This sequence belongs to the eIF-3 subunit L family. Component of the eukaryotic translation initiation factor 3 (eIF-3) complex. The eIF-3 complex interacts with pix.

It is found in the cytoplasm. Functionally, component of the eukaryotic translation initiation factor 3 (eIF-3) complex, which is involved in protein synthesis of a specialized repertoire of mRNAs and, together with other initiation factors, stimulates binding of mRNA and methionyl-tRNAi to the 40S ribosome. The eIF-3 complex specifically targets and initiates translation of a subset of mRNAs involved in cell proliferation. The sequence is that of Eukaryotic translation initiation factor 3 subunit L from Drosophila virilis (Fruit fly).